Here is a 439-residue protein sequence, read N- to C-terminus: MHDIRWIRDNPEAFDAALGRRGLEPQAAALIALDEKRRGAIAAFEQAQARRNAASKEIGEAKKAKENARADALMAEVGELKTKLPEMDAAAKRLEEDLRKELAQIPNLPLAEVPEGADEHGNVQHHVYGEPRSYAFKPKEHVALGEGLGFMDFERAAKLSGARFVVLKSGLARLERAIGQFFLDVHTGEHGYTEVNPPLLVRDDAMFGTAQLPKFREDQFAAGSLDAEGQGYWLIPTAEVPLTNLVRESILDEKELPMRLTALTPCFRAEAGAAGRDTRGMIRQHQFTKVELVSITTPDESRNEHERMLSCAEEVLKRLGLHYRVMTLCTGDMGFASQKTYDIEVWMPGQISSQGEGGMYREISSCSVCGDFQARRMDARYRGPDNKPHFVHTLNGSGTAVGRALIAVMETYQQEDGSIAVPDVLQPYMGGLKVIERDR.

237-239 serves as a coordination point for L-serine; the sequence is TAE. An ATP-binding site is contributed by 268–270; it reads RAE. E291 contributes to the L-serine binding site. 362–365 contributes to the ATP binding site; that stretch reads EISS. S397 provides a ligand contact to L-serine.

This sequence belongs to the class-II aminoacyl-tRNA synthetase family. Type-1 seryl-tRNA synthetase subfamily. In terms of assembly, homodimer. The tRNA molecule binds across the dimer.

It localises to the cytoplasm. The catalysed reaction is tRNA(Ser) + L-serine + ATP = L-seryl-tRNA(Ser) + AMP + diphosphate + H(+). It catalyses the reaction tRNA(Sec) + L-serine + ATP = L-seryl-tRNA(Sec) + AMP + diphosphate + H(+). It participates in aminoacyl-tRNA biosynthesis; selenocysteinyl-tRNA(Sec) biosynthesis; L-seryl-tRNA(Sec) from L-serine and tRNA(Sec): step 1/1. Its function is as follows. Catalyzes the attachment of serine to tRNA(Ser). Is also able to aminoacylate tRNA(Sec) with serine, to form the misacylated tRNA L-seryl-tRNA(Sec), which will be further converted into selenocysteinyl-tRNA(Sec). This chain is Serine--tRNA ligase, found in Afipia carboxidovorans (strain ATCC 49405 / DSM 1227 / KCTC 32145 / OM5) (Oligotropha carboxidovorans).